Reading from the N-terminus, the 78-residue chain is Acyl carrier protein (78 aa).

In terms of domain architecture, Carrier spans 2-77; the sequence is STIEERVKKI…EAIDYINAHA (76 aa). At Ser37 the chain carries O-(pantetheine 4'-phosphoryl)serine.

It belongs to the acyl carrier protein (ACP) family. In terms of processing, 4'-phosphopantetheine is transferred from CoA to a specific serine of apo-ACP by AcpS. This modification is essential for activity because fatty acids are bound in thioester linkage to the sulfhydryl of the prosthetic group.

It localises to the cytoplasm. Its pathway is lipid metabolism; fatty acid biosynthesis. Its function is as follows. Carrier of the growing fatty acid chain in fatty acid biosynthesis. The protein is Acyl carrier protein of Stutzerimonas stutzeri (strain A1501) (Pseudomonas stutzeri).